Consider the following 147-residue polypeptide: Large ribosomal subunit protein uL15 (147 aa).

The span at 1–10 (MYLNTLSPNS) shows a compositional bias: polar residues. The interval 1–48 (MYLNTLSPNSKSHKKSKRVGRGIGSGFGKTSGRGHKGQKSRSGCKIRR) is disordered. The segment covering 11–20 (KSHKKSKRVG) has biased composition (basic residues). Gly residues predominate over residues 21-31 (RGIGSGFGKTS). Residues 32–47 (GRGHKGQKSRSGCKIR) show a composition bias toward basic residues.

Belongs to the universal ribosomal protein uL15 family. As to quaternary structure, part of the 50S ribosomal subunit.

Binds to the 23S rRNA. This is Large ribosomal subunit protein uL15 from Buchnera aphidicola subsp. Baizongia pistaciae (strain Bp).